The sequence spans 634 residues: Chaperone protein HtpG (634 aa).

The tract at residues 1–342 (MSVETQKETL…SNDLSLNVSR (342 aa)) is a; substrate-binding. Residues 343 to 559 (EILQKDPIID…EQDLGLQMRQ (217 aa)) are b. The interval 560–634 (ILEASGQKVP…LNKLLVELSV (75 aa)) is c.

The protein belongs to the heat shock protein 90 family. As to quaternary structure, homodimer.

Its subcellular location is the cytoplasm. Its function is as follows. Molecular chaperone. Has ATPase activity. In Pseudomonas fluorescens (strain ATCC BAA-477 / NRRL B-23932 / Pf-5), this protein is Chaperone protein HtpG.